The primary structure comprises 494 residues: Psoralen synthase (494 aa).

The chain crosses the membrane as a helical span at residues tyrosine 12 to leucine 29. Cysteine 436 contributes to the heme binding site.

It belongs to the cytochrome P450 family.

The protein localises to the endoplasmic reticulum membrane. It is found in the microsome membrane. The catalysed reaction is (7S)-marmesin + reduced [NADPH--hemoprotein reductase] + O2 = psoralen + acetone + oxidized [NADPH--hemoprotein reductase] + 2 H2O + H(+). Inhibited by columbianetin. Its function is as follows. Involved in linear furanocumarin (psoralen) biosynthesis. Converts marmesin to psoralen. This is Psoralen synthase (CYP71AJ1) from Ammi majus (Bishop's weed).